We begin with the raw amino-acid sequence, 173 residues long: Bifunctional protein PyrR (173 aa).

Substrate is bound by residues 40 to 41 (TR), 97 to 105 (DDVLYTGRT), and R130. The short motif at 93–105 (VILIDDVLYTGRT) is the PRPP-binding element.

The protein belongs to the purine/pyrimidine phosphoribosyltransferase family. PyrR subfamily. Homodimer and homohexamer; in equilibrium.

It carries out the reaction UMP + diphosphate = 5-phospho-alpha-D-ribose 1-diphosphate + uracil. In terms of biological role, regulates transcriptional attenuation of the pyrimidine nucleotide (pyr) operon by binding in a uridine-dependent manner to specific sites on pyr mRNA. This disrupts an antiterminator hairpin in the RNA and favors formation of a downstream transcription terminator, leading to a reduced expression of downstream genes. Also displays a weak uracil phosphoribosyltransferase activity which is not physiologically significant. This Streptococcus pyogenes serotype M6 (strain ATCC BAA-946 / MGAS10394) protein is Bifunctional protein PyrR.